A 67-amino-acid polypeptide reads, in one-letter code: Protein AaeX (67 aa).

The next 2 membrane-spanning stretches (helical) occupy residues 3–23 and 43–63; these read VLPVFVMFGLSFPPVFIELII and LVWHPALFNTALYCCVFYLVS.

It belongs to the AaeX family.

It is found in the cell membrane. This Pantoea vagans (strain C9-1) (Pantoea agglomerans (strain C9-1)) protein is Protein AaeX.